Consider the following 726-residue polypeptide: Tripartite terminase subunit 1 (726 aa).

A C3H1-type zinc finger spans residues 189–217; that stretch reads CMKCYEELTLTPNQGKSLRKRLHGKFCNH. Residue 626-633 participates in ATP binding; it reads YNDVFGKR.

Belongs to the herpesviridae TRM1 protein family. In terms of assembly, associates with TRM2 and TRM3 to form the tripartite terminase complex. Interacts with portal protein.

It localises to the host nucleus. Its function is as follows. Component of the molecular motor that translocates viral genomic DNA in empty capsid during DNA packaging. Forms a tripartite terminase complex together with TRM2 and TRM3 in the host cytoplasm. Once the complex reaches the host nucleus, it interacts with the capsid portal vertex. This portal forms a ring in which genomic DNA is translocated into the capsid. TRM1 carries an endonuclease activity that plays an important role for the cleavage of concatemeric viral DNA into unit length genomes. In Human herpesvirus 6B (strain Z29) (HHV-6 variant B), this protein is Tripartite terminase subunit 1.